Here is a 293-residue protein sequence, read N- to C-terminus: Acetylglutamate kinase (293 aa).

Residues glycine 68–glycine 69, arginine 90, and asparagine 189 each bind substrate.

This sequence belongs to the acetylglutamate kinase family. ArgB subfamily.

It is found in the cytoplasm. It catalyses the reaction N-acetyl-L-glutamate + ATP = N-acetyl-L-glutamyl 5-phosphate + ADP. Its pathway is amino-acid biosynthesis; L-arginine biosynthesis; N(2)-acetyl-L-ornithine from L-glutamate: step 2/4. In terms of biological role, catalyzes the ATP-dependent phosphorylation of N-acetyl-L-glutamate. This is Acetylglutamate kinase from Caldicellulosiruptor bescii (strain ATCC BAA-1888 / DSM 6725 / KCTC 15123 / Z-1320) (Anaerocellum thermophilum).